The primary structure comprises 366 residues: GTPase Obg (366 aa).

Residues 1–161 (MRFVDEARIQ…FNLRLELKIL (161 aa)) enclose the Obg domain. Residues 121 to 148 (SGGRGGKGNEHFKSSTMRAPRFSQPGEP) form a disordered region. An OBG-type G domain is found at 162–334 (ADAGLIGLPN…LVQELWQVCE (173 aa)). GTP contacts are provided by residues 168–175 (GLPNAGKS), 193–197 (FTTLT), 217–220 (DIPG), 287–290 (NKID), and 315–317 (SAR). The Mg(2+) site is built by serine 175 and threonine 195.

It belongs to the TRAFAC class OBG-HflX-like GTPase superfamily. OBG GTPase family. As to quaternary structure, monomer. The cofactor is Mg(2+).

It is found in the cytoplasm. An essential GTPase which binds GTP, GDP and possibly (p)ppGpp with moderate affinity, with high nucleotide exchange rates and a fairly low GTP hydrolysis rate. Plays a role in control of the cell cycle, stress response, ribosome biogenesis and in those bacteria that undergo differentiation, in morphogenesis control. The polypeptide is GTPase Obg (Desulfovibrio desulfuricans (strain ATCC 27774 / DSM 6949 / MB)).